A 293-amino-acid chain; its full sequence is Taste receptor type 2 member 143 (293 aa).

Residues 1–6 (MPSTPT) are Extracellular-facing. The chain crosses the membrane as a helical span at residues 7-27 (LIFIIIFYLVSLASMLQNGFM). The Cytoplasmic portion of the chain corresponds to 28–55 (MIVLGREWMRNRTLPAADMIVASLASSR). A helical transmembrane segment spans residues 56-76 (FCLHGIAILANLLASFDFCYQ). The Extracellular segment spans residues 77 to 79 (ANL). A helical transmembrane segment spans residues 80 to 100 (IGILWDFTNTLIFWLTAWLAI). Residues 101–127 (FYCVKISSFSHPVLFWLKWRISQLVPR) are Cytoplasmic-facing. A helical transmembrane segment spans residues 128 to 148 (LLVVSLIIGGLSAVISATGNF). Residues 149–181 (MANQMTISQGFHGNCTFGHMSLDFYRYYYLYHS) are Extracellular-facing. A glycan (N-linked (GlcNAc...) asparagine) is linked at Asn162. The chain crosses the membrane as a helical span at residues 182–202 (VLMWFTPFFLFLVSVIVLMFS). The Cytoplasmic portion of the chain corresponds to 203–227 (LYQHVEKMRGHRPGPWDLHTQAHTM). A helical transmembrane segment spans residues 228–248 (ALKSLTFFFIFYIFFFLALVI). Residues 249 to 264 (SSTKRKSMQSYYWARE) are Extracellular-facing. A helical membrane pass occupies residues 265 to 285 (AIIYTGIFLNSIILLFSNPKL). At 286–293 (RKALKMRF) the chain is on the cytoplasmic side.

The protein belongs to the G-protein coupled receptor T2R family.

The protein localises to the membrane. Its function is as follows. Putative taste receptor which may play a role in the perception of bitterness. The protein is Taste receptor type 2 member 143 (Tas2r143) of Mus musculus (Mouse).